The chain runs to 354 residues: Trans-L-3-hydroxyproline dehydratase (354 aa).

Residue Cys104 is the Proton acceptor of the active site. Substrate is bound by residues Gly105 to His106, Asp269, and Gly274 to Ser275.

It belongs to the proline racemase family. Homodimer.

It carries out the reaction trans-3-hydroxy-L-proline = 1-pyrroline-2-carboxylate + H2O. Functionally, catalyzes the dehydration of trans-3-hydroxy-L-proline to delta-1-pyrroline-2-carboxylate (Pyr2C). This is Trans-L-3-hydroxyproline dehydratase (L3hypdh) from Mus musculus (Mouse).